Consider the following 140-residue polypeptide: ATP synthase epsilon chain, chloroplastic (140 aa).

It belongs to the ATPase epsilon chain family. F-type ATPases have 2 components, CF(1) - the catalytic core - and CF(0) - the membrane proton channel. CF(1) has five subunits: alpha(3), beta(3), gamma(1), delta(1), epsilon(1). CF(0) has three main subunits: a, b and c.

The protein resides in the plastid. The protein localises to the chloroplast thylakoid membrane. In terms of biological role, produces ATP from ADP in the presence of a proton gradient across the membrane. The sequence is that of ATP synthase epsilon chain, chloroplastic from Panax ginseng (Korean ginseng).